Here is a 510-residue protein sequence, read N- to C-terminus: GMP synthase [glutamine-hydrolyzing] (510 aa).

The region spanning 3 to 194 (QILILDFGSQ…ARVICGYKEK (192 aa)) is the Glutamine amidotransferase type-1 domain. Cysteine 80 functions as the Nucleophile in the catalytic mechanism. Active-site residues include histidine 168 and glutamate 170. One can recognise a GMPS ATP-PPase domain in the interval 195-385 (WTPASIMTAS…LGLGSEIVDI (191 aa)). 222–228 (SGGVDSS) serves as a coordination point for ATP.

As to quaternary structure, homodimer.

It catalyses the reaction XMP + L-glutamine + ATP + H2O = GMP + L-glutamate + AMP + diphosphate + 2 H(+). Its pathway is purine metabolism; GMP biosynthesis; GMP from XMP (L-Gln route): step 1/1. Functionally, catalyzes the synthesis of GMP from XMP. This is GMP synthase [glutamine-hydrolyzing] from Elusimicrobium minutum (strain Pei191).